We begin with the raw amino-acid sequence, 403 residues long: Acetate kinase (403 aa).

Asparagine 8 is a binding site for Mg(2+). Lysine 15 contacts ATP. Position 90 (arginine 90) interacts with substrate. Aspartate 147 (proton donor/acceptor) is an active-site residue. ATP contacts are provided by residues 207 to 211 (HLGSG), 282 to 284 (DLR), and 330 to 334 (GVGEN). Mg(2+) is bound at residue glutamate 384.

The protein belongs to the acetokinase family. In terms of assembly, homodimer. It depends on Mg(2+) as a cofactor. Requires Mn(2+) as cofactor.

Its subcellular location is the cytoplasm. It carries out the reaction acetate + ATP = acetyl phosphate + ADP. The protein operates within metabolic intermediate biosynthesis; acetyl-CoA biosynthesis; acetyl-CoA from acetate: step 1/2. In terms of biological role, catalyzes the formation of acetyl phosphate from acetate and ATP. Can also catalyze the reverse reaction. The protein is Acetate kinase of Exiguobacterium sp. (strain ATCC BAA-1283 / AT1b).